Reading from the N-terminus, the 371-residue chain is Phosphate acyltransferase (371 aa).

This sequence belongs to the PlsX family. Homodimer. Probably interacts with PlsY.

Its subcellular location is the cytoplasm. The catalysed reaction is a fatty acyl-[ACP] + phosphate = an acyl phosphate + holo-[ACP]. It functions in the pathway lipid metabolism; phospholipid metabolism. Functionally, catalyzes the reversible formation of acyl-phosphate (acyl-PO(4)) from acyl-[acyl-carrier-protein] (acyl-ACP). This enzyme utilizes acyl-ACP as fatty acyl donor, but not acyl-CoA. This chain is Phosphate acyltransferase, found in Ruegeria pomeroyi (strain ATCC 700808 / DSM 15171 / DSS-3) (Silicibacter pomeroyi).